The chain runs to 347 residues: Methylthioribose-1-phosphate isomerase (347 aa).

Substrate is bound by residues 46-48 (RGA), arginine 89, and glutamine 196. Aspartate 237 serves as the catalytic Proton donor. 247–248 (NK) is a substrate binding site.

Belongs to the eIF-2B alpha/beta/delta subunits family. MtnA subfamily.

The catalysed reaction is 5-(methylsulfanyl)-alpha-D-ribose 1-phosphate = 5-(methylsulfanyl)-D-ribulose 1-phosphate. It participates in amino-acid biosynthesis; L-methionine biosynthesis via salvage pathway; L-methionine from S-methyl-5-thio-alpha-D-ribose 1-phosphate: step 1/6. Functionally, catalyzes the interconversion of methylthioribose-1-phosphate (MTR-1-P) into methylthioribulose-1-phosphate (MTRu-1-P). This is Methylthioribose-1-phosphate isomerase from Chloroflexus aurantiacus (strain ATCC 29366 / DSM 635 / J-10-fl).